We begin with the raw amino-acid sequence, 521 residues long: Cytochrome P450 monooxygenase astF (521 aa).

A helical transmembrane segment spans residues T14–G34. N-linked (GlcNAc...) asparagine glycosylation is found at N198, N218, N268, and N281. C430 lines the heme pocket.

Belongs to the cytochrome P450 family. It depends on heme as a cofactor.

It is found in the membrane. It participates in secondary metabolite biosynthesis; terpenoid biosynthesis. In terms of biological role, cytochrome P450 monooxygenase; part of the gene cluster that mediates the biosynthesis of astellolides, drimane-type sesquiterpene esters that show antimicrobial, anti-inflammatory, and anti-tumor activities. The first step in astellolide biosynthesis is performed by the sesquiterpene cyclase astC that catalyzes the formation of drimanyl pyrophosphate from farnesyl pyrophosphate. Drimanyl pyrophosphate is then dephosphorylated by the sesquiterpene phosphatase astI to produce drimanyl monophosphate which is further dephosphorylated to drim-8-ene-11-ol by atsK. Drim-8-ene-11-ol is converted to confertifolin, probably by the cytochrome P450 monooxygenase astD and/or the dehydrogenase astE. The cytochrome P450 monooxygenases astB, astF and astJ then hydroxylate confertifolin at C6, C14, or C15 to form trihydroxy confertifolin. The nonribosomal peptide synthetase astA catalyzes ester bond formation between trihydroxy contifolin and benzoic acid (BA) or 4-hydroxy benzoic acid (4HBA), leading to the formation of dideacetyl astellolides A and B, respectively. Finally, the O-acetyltransferase astG converts dideacetyl astellolides A and B into deacetyl astellolides A and B. This is Cytochrome P450 monooxygenase astF from Aspergillus oryzae (strain ATCC 42149 / RIB 40) (Yellow koji mold).